Here is a 188-residue protein sequence, read N- to C-terminus: dCTP deaminase (188 aa).

DCTP contacts are provided by residues 111-116, 135-137, Gln156, Tyr170, and Gln180; these read KSTYAR and TLE. Glu137 functions as the Proton donor/acceptor in the catalytic mechanism.

Belongs to the dCTP deaminase family. As to quaternary structure, homotrimer.

It carries out the reaction dCTP + H2O + H(+) = dUTP + NH4(+). Its pathway is pyrimidine metabolism; dUMP biosynthesis; dUMP from dCTP (dUTP route): step 1/2. Its function is as follows. Catalyzes the deamination of dCTP to dUTP. The polypeptide is dCTP deaminase (Azoarcus sp. (strain BH72)).